A 376-amino-acid polypeptide reads, in one-letter code: Succinyl-diaminopimelate desuccinylase (376 aa).

Zn(2+) is bound at residue His66. The active site involves Asp68. Asp99 contributes to the Zn(2+) binding site. Glu133 serves as the catalytic Proton acceptor. Glu134, Glu162, and His349 together coordinate Zn(2+).

It belongs to the peptidase M20A family. DapE subfamily. As to quaternary structure, homodimer. Requires Zn(2+) as cofactor. Co(2+) serves as cofactor.

The catalysed reaction is N-succinyl-(2S,6S)-2,6-diaminopimelate + H2O = (2S,6S)-2,6-diaminopimelate + succinate. It participates in amino-acid biosynthesis; L-lysine biosynthesis via DAP pathway; LL-2,6-diaminopimelate from (S)-tetrahydrodipicolinate (succinylase route): step 3/3. Functionally, catalyzes the hydrolysis of N-succinyl-L,L-diaminopimelic acid (SDAP), forming succinate and LL-2,6-diaminopimelate (DAP), an intermediate involved in the bacterial biosynthesis of lysine and meso-diaminopimelic acid, an essential component of bacterial cell walls. In Buchnera aphidicola subsp. Cinara cedri (strain Cc), this protein is Succinyl-diaminopimelate desuccinylase.